We begin with the raw amino-acid sequence, 165 residues long: Cyclic pyranopterin monophosphate synthase (165 aa).

Substrate-binding positions include methionine 76 to histidine 78 and isoleucine 113 to glutamate 114. The active site involves aspartate 128.

The protein belongs to the MoaC family. As to quaternary structure, homohexamer; trimer of dimers.

The enzyme catalyses (8S)-3',8-cyclo-7,8-dihydroguanosine 5'-triphosphate = cyclic pyranopterin phosphate + diphosphate. The protein operates within cofactor biosynthesis; molybdopterin biosynthesis. In terms of biological role, catalyzes the conversion of (8S)-3',8-cyclo-7,8-dihydroguanosine 5'-triphosphate to cyclic pyranopterin monophosphate (cPMP). This is Cyclic pyranopterin monophosphate synthase from Limosilactobacillus fermentum (strain NBRC 3956 / LMG 18251) (Lactobacillus fermentum).